The sequence spans 202 residues: Superoxide dismutase [Mn] (202 aa).

Mn(2+) is bound at residue histidine 27. A phosphothreonine mark is found at threonine 34 and threonine 70. Mn(2+)-binding residues include histidine 82, aspartate 164, and histidine 168.

It belongs to the iron/manganese superoxide dismutase family. In terms of assembly, homodimer; under aerobic conditions. Under anaerobic conditions it is a component of the so-called 'green protein' complex (GPC), which consists of at least two components, SodA and a nucleoside diphosphate kinase (NDK). Mn(2+) is required as a cofactor.

The protein localises to the cytoplasm. The catalysed reaction is 2 superoxide + 2 H(+) = H2O2 + O2. Destroys superoxide anion radicals which are normally produced within the cells and which are toxic to biological systems. Active only in homodimeric state. This Virgibacillus halodenitrificans (Bacillus halodenitrificans) protein is Superoxide dismutase [Mn] (sodA).